A 193-amino-acid polypeptide reads, in one-letter code: MYQKENCVEKSMTGAVIYDECNIHGRVETNSTHALFYDDIETNNSRCNNFRNLTNLIKLSLMNVLMTSLESLFFIKNIMKLMMVICLEWKTALLKLLLFQWIVQKIVKQLLKNSTFVQNLKMYIILQTLHKRNPIDLHVQIHCATIVRMKTFKTILILKQQSVLQSMVHLILNFYQQFTIQSLMAQITVWKSQ.

Repression of replication initiation (possible). The protein is Protein D5 (ddpE) of Dictyostelium discoideum (Social amoeba).